We begin with the raw amino-acid sequence, 1914 residues long: Fatty acid synthase beta subunit stcK (1914 aa).

The interval Leu17–Asn395 is acetyltransferase (AT) domain. Residues Thr446–Asp692 form an enoyl reductase (ER) domain region. Residues Gly1009–Ile1509 are dehydratase (DH) domain. Positions Phe1398 to Glu1532 constitute a MaoC-like domain. The malonyl/palmitoyl transferase (MT/PT) domain stretch occupies residues Tyr1548–Ser1900.

This sequence belongs to the fungal fatty acid synthetase subunit beta family. As to quaternary structure, [Alpha(6)beta(6)] hexamers of two multifunctional subunits (alpha and beta).

The enzyme catalyses acetyl-CoA + n malonyl-CoA + 2n NADPH + 4n H(+) = a long-chain-acyl-CoA + n CoA + n CO2 + 2n NADP(+).. It carries out the reaction holo-[ACP] + acetyl-CoA = acetyl-[ACP] + CoA. The catalysed reaction is holo-[ACP] + malonyl-CoA = malonyl-[ACP] + CoA. It catalyses the reaction a (3R)-hydroxyacyl-[ACP] = a (2E)-enoyl-[ACP] + H2O. The enzyme catalyses a 2,3-saturated acyl-[ACP] + NAD(+) = a (2E)-enoyl-[ACP] + NADH + H(+). It carries out the reaction (9Z)-octadecenoyl-[ACP] + H2O = (9Z)-octadecenoate + holo-[ACP] + H(+). Its pathway is mycotoxin biosynthesis; sterigmatocystin biosynthesis. In terms of biological role, fatty acid synthase beta subunit; part of the gene cluster that mediates the biosynthesis of sterigmatocystin (ST), a polyketide-derived furanocoumarin which is part of the most toxic and carcinogenic compounds among the known mycotoxins. The first step in the biosynthesis of sterigmatocystin is the production of hexanoate by the fatty acid synthase (FAS) units stcJ and stcK. The polyketide backbone is assembled by the non-reducing polyketide synthase stcA by condensation of the starter hexanoyl-CoA and 7 malonyl-CoA extender units followed by cyclization and release of norsolorinic acid. Norsolorinic acid is the first stable intermediate in the biosynthesis of sterigmatocystin and is converted into averantin (AVN) by the ketoreductase stcE which reduces the hexanoate ketone to an alcohol. Averantin is then oxidized into 5'-hydroxyaverantin (HAVN) by the cytochrome P450 monooxygenase stcF. 5'-hydroxyaverantin is further converted to 5'-oxyaverantin (OAVN) by the 5'-hydroxyaverantin dehydrogenase stcG. The next step is the conversion of OAVN into averufin (AVF) which is catalyzed by a yet to be identified enzyme. The cytochrome P450 monooxygenase stcB and the flavin-binding monooxygenase stcW are both required for the conversion of averufin to 1-hydroxyversicolorone. The esterase stcI probably catalyzes the formation of versiconal hemiacetal acetate from 1-hydroxyversicolorone. The oxydoreductase stcN then probably catalyzes the biosynthetic step from versiconal to versicolorin B (VERB). The next step is performed by the versicolorin B desaturase stcL to produce versicolorin A (VERA). The ketoreductase stcU and the cytochrome P450 monooxygenase stcS are involved in the conversion of versicolorin A to demethylsterigmatocystin. The Baeyer-Villiger oxidas stcQ and the reductase stcR might be involved in the biosynthetic step from versicolorin A to demethylsterigmatocystin. The final step in the biosynthesis of sterigmatocystin is the methylation of demethylsterigmatocystin catalyzed by the methyltransferase stcP. This chain is Fatty acid synthase beta subunit stcK, found in Emericella nidulans (strain FGSC A4 / ATCC 38163 / CBS 112.46 / NRRL 194 / M139) (Aspergillus nidulans).